A 193-amino-acid polypeptide reads, in one-letter code: Potassium-transporting ATPase KdpC subunit (193 aa).

A helical membrane pass occupies residues 7–27; that stretch reads PLIVVFVVLVAVTGLAYPAVM.

The protein belongs to the KdpC family. In terms of assembly, the system is composed of three essential subunits: KdpA, KdpB and KdpC.

The protein localises to the cell inner membrane. Part of the high-affinity ATP-driven potassium transport (or Kdp) system, which catalyzes the hydrolysis of ATP coupled with the electrogenic transport of potassium into the cytoplasm. This subunit acts as a catalytic chaperone that increases the ATP-binding affinity of the ATP-hydrolyzing subunit KdpB by the formation of a transient KdpB/KdpC/ATP ternary complex. The sequence is that of Potassium-transporting ATPase KdpC subunit from Burkholderia mallei (strain NCTC 10247).